Reading from the N-terminus, the 355-residue chain is Acidic fibroblast growth factor intracellular-binding protein B (355 aa).

In terms of assembly, interacts with IER2.

Its subcellular location is the nucleus. The protein resides in the endomembrane system. Its function is as follows. Mediates with IER2 FGF-signaling in Kupffer's vesicle ciliogenesis and in the establishment of laterality in the embryo. May be involved in mitogenic function of FGF1. This chain is Acidic fibroblast growth factor intracellular-binding protein B, found in Danio rerio (Zebrafish).